A 26-amino-acid chain; its full sequence is Aralin B chain (26 aa).

In terms of assembly, disulfide-linked dimer of A and B chains. Post-translationally, glycosylated. High-mannose type oligosaccharides.

In terms of biological role, lectin specific for galactose (Gal) and its derivatives. Induces apoptosis. Has cytotoxic activity against several human cancer cell lines. Is less cytotoxic to normal human cells. In Aralia elata (Japanese angelica tree), this protein is Aralin B chain.